A 756-amino-acid chain; its full sequence is Cilium assembly protein DZIP1L (756 aa).

The tract at residues 1–20 (MLGQFSPGEPYTTSLSSTPP) is disordered. Residues 10–19 (PYTTSLSSTP) are compositionally biased toward low complexity. Positions 108–158 (DFLSSQLAGLEERLQAATSLVQQGEGQRAELEKSLQETKQENRRRKQLIAT) form a coiled coil. The C2H2-type zinc finger occupies 171–194 (HKCQFCEKSFVNYSYLQAHVQRRH). Composition is skewed to basic and acidic residues over residues 193–202 (RHPEVTDAEK), 237–262 (NLRR…ERWK), 319–335 (DPEK…LRER), and 344–365 (RRKF…KSEN). Disordered stretches follow at residues 193–212 (RHPE…EEME), 233–262 (QQAD…ERWK), 310–365 (NNAS…KSEN), 409–466 (KIKK…MRES), 531–626 (VKSL…AYIT), and 693–756 (IKTP…GTSA). 2 coiled-coil regions span residues 196 to 283 (EVTD…FLQE) and 321 to 416 (EKEM…LSAT). Residues 534 to 558 (LQKSSGKPTPNTLKQRGKKTSTPLN) show a composition bias toward polar residues. The segment covering 560–578 (KSLRFRQDSKASDRREKSQ) has biased composition (basic and acidic residues). Residues 586–598 (TPTPRSKAPPPNQ) show a composition bias toward pro residues.

It belongs to the DZIP C2H2-type zinc-finger protein family.

The protein resides in the cytoplasm. It localises to the cytoskeleton. The protein localises to the cilium basal body. Its subcellular location is the microtubule organizing center. It is found in the centrosome. The protein resides in the centriole. In terms of biological role, involved in primary cilium formation. Probably acts as a transition zone protein required for localization of PKD1/PC1 and PKD2/PC2 to the ciliary membrane. The polypeptide is Cilium assembly protein DZIP1L (dzip1l) (Danio rerio (Zebrafish)).